Consider the following 408-residue polypeptide: UDP-N-acetylglucosamine--dolichyl-phosphate N-acetylglucosaminephosphotransferase (408 aa).

The Lumenal portion of the chain corresponds to 1–10 (MWAFPELPLP). Residues 11-38 (LLVNLFGSLLGFVATVTLIPAFRSHFIA) form a helical membrane-spanning segment. Residues 39–58 (ARLCGQDLNKLSRQQIPESQ) are Cytoplasmic-facing. UDP-N-acetyl-alpha-D-glucosamine-binding positions include 44–46 (QDL) and E56. A helical transmembrane segment spans residues 59–78 (GVICGAVFLIILFCFIPFPF). The Lumenal portion of the chain corresponds to 79–91 (LNCFVEEQCKAFP). A helical transmembrane segment spans residues 92–118 (HHEFVALIGALLAICCMIFLGFADDVL). Residues 119 to 121 (NLP) are Cytoplasmic-facing. A helical transmembrane segment spans residues 122 to 143 (WRHKLLLPTAASLPLLMVYFTN). K125 contacts dolichyl phosphate. Residues 144 to 166 (FGNTTIVVPKPFRWILGLHLDLG) lie on the Lumenal side of the membrane. An N-linked (GlcNAc...) asparagine glycan is attached at N146. A helical transmembrane segment spans residues 167 to 186 (ILYYVYMGLLAVFCTNAINI). A dolichyl phosphate-binding site is contributed by 178–186 (VFCTNAINI). Residue N185 coordinates Mg(2+). The Cytoplasmic portion of the chain corresponds to 187 to 192 (LAGING). N191 contributes to the UDP-N-acetyl-alpha-D-glucosamine binding site. A helical membrane pass occupies residues 193 to 213 (LEAGQSLVISASIIVFNLVEL). The Lumenal portion of the chain corresponds to 214-218 (EGDYR). A helical transmembrane segment spans residues 219 to 242 (DDHVFSLYFMIPFFFTTLGLLYHN). Residues 243 to 250 (WYPSQVFV) are Cytoplasmic-facing. Residues 251–269 (GDTFCYFAGMTFAVVGILG) form a helical membrane-spanning segment. D252 provides a ligand contact to Mg(2+). At 270–271 (HF) the chain is on the lumenal side. The chain crosses the membrane as a helical span at residues 272–293 (SKTMLLFFIPQVFNFLYSLPQL). The Cytoplasmic segment spans residues 294–375 (LHAIPCPRHR…LLLKIFGPIH (82 aa)). Position 301–303 (301–303 (RHR)) interacts with UDP-N-acetyl-alpha-D-glucosamine. The helical transmembrane segment at 376 to 400 (ERNLTLLLLLLQILSSAVTFSIRYQ) threads the bilayer. At 401 to 408 (LVRLFYDV) the chain is on the lumenal side.

Belongs to the glycosyltransferase 4 family. As to quaternary structure, homodimer. Requires Mg(2+) as cofactor.

The protein localises to the endoplasmic reticulum membrane. The enzyme catalyses a di-trans,poly-cis-dolichyl phosphate + UDP-N-acetyl-alpha-D-glucosamine = an N-acetyl-alpha-D-glucosaminyl-diphospho-di-trans,poly-cis-dolichol + UMP. Its pathway is protein modification; protein glycosylation. Inhibited by natural nucleoside antibiotic tunicamycin, which acts as a structural analog and competitor of UDP-GlcNAc. Functionally, UDP-N-acetylglucosamine--dolichyl-phosphate N-acetylglucosaminephosphotransferase that operates in the biosynthetic pathway of dolichol-linked oligosaccharides, the glycan precursors employed in protein asparagine (N)-glycosylation. The assembly of dolichol-linked oligosaccharides begins on the cytosolic side of the endoplasmic reticulum membrane and finishes in its lumen. The sequential addition of sugars to dolichol pyrophosphate produces dolichol-linked oligosaccharides containing fourteen sugars, including two GlcNAcs, nine mannoses and three glucoses. Once assembled, the oligosaccharide is transferred from the lipid to nascent proteins by oligosaccharyltransferases. Catalyzes the initial step of dolichol-linked oligosaccharide biosynthesis, transfering GlcNAc-1-P from cytosolic UDP-GlcNAc onto the carrier lipid dolichyl phosphate (P-dolichol), yielding GlcNAc-P-P-dolichol embedded in the cytoplasmic leaflet of the endoplasmic reticulum membrane. This Cricetulus longicaudatus (Long-tailed dwarf hamster) protein is UDP-N-acetylglucosamine--dolichyl-phosphate N-acetylglucosaminephosphotransferase (DPAGT1).